We begin with the raw amino-acid sequence, 328 residues long: GMP reductase (328 aa).

Cys-176 functions as the Thioimidate intermediate in the catalytic mechanism. Residue 205 to 228 (IIADGGIRTHGDIAKSIRFGASMV) coordinates NADP(+).

Belongs to the IMPDH/GMPR family. GuaC type 2 subfamily.

It carries out the reaction IMP + NH4(+) + NADP(+) = GMP + NADPH + 2 H(+). Its function is as follows. Catalyzes the irreversible NADPH-dependent deamination of GMP to IMP. It functions in the conversion of nucleobase, nucleoside and nucleotide derivatives of G to A nucleotides, and in maintaining the intracellular balance of A and G nucleotides. This chain is GMP reductase, found in Streptococcus pneumoniae (strain Hungary19A-6).